A 37-amino-acid polypeptide reads, in one-letter code: GFSSIFRGVAKFASKGLGKDLARLGVNLVACKISKQC.

Cysteines 31 and 37 form a disulfide.

As to expression, expressed by the skin glands.

Its subcellular location is the secreted. Functionally, antibacterial activity against Gram-negative bacterium E.coli. This is Esculentin-2P from Lithobates pipiens (Northern leopard frog).